We begin with the raw amino-acid sequence, 104 residues long: Large ribosomal subunit protein uL24 (104 aa).

The protein belongs to the universal ribosomal protein uL24 family. As to quaternary structure, part of the 50S ribosomal subunit.

In terms of biological role, one of two assembly initiator proteins, it binds directly to the 5'-end of the 23S rRNA, where it nucleates assembly of the 50S subunit. Its function is as follows. One of the proteins that surrounds the polypeptide exit tunnel on the outside of the subunit. The sequence is that of Large ribosomal subunit protein uL24 from Methylobacterium radiotolerans (strain ATCC 27329 / DSM 1819 / JCM 2831 / NBRC 15690 / NCIMB 10815 / 0-1).